The primary structure comprises 180 residues: E3 ubiquitin-protein ligase RNF5 (180 aa).

Ala2 is subject to N-acetylalanine. The RING-type zinc finger occupies 27–68; sequence CNICLETAREAVVSVCGHLYCWPCLHQWLETRPERQECPVCK. The segment at 79–110 is disordered; the sequence is LYGRGSQKPQDPRLKTPPRPQGQRPAPESRGG. Ser84 carries the phosphoserine modification. The residue at position 94 (Thr94) is a Phosphothreonine. Ser107 carries the post-translational modification Phosphoserine. The next 2 helical transmembrane spans lie at 118–138 and 160–180; these read GGFH…TTVF and SWQD…LLSI.

It belongs to the RNF5 family. In terms of assembly, interacts with PXN. Interacts with Salmonella typhimurium sopA. Interacts with JKAMP. Interacts with STING1; the interaction of endogenous proteins is dependent on viral infection. In terms of tissue distribution, widely expressed.

The protein localises to the cell membrane. It localises to the mitochondrion membrane. The protein resides in the endoplasmic reticulum membrane. The enzyme catalyses S-ubiquitinyl-[E2 ubiquitin-conjugating enzyme]-L-cysteine + [acceptor protein]-L-lysine = [E2 ubiquitin-conjugating enzyme]-L-cysteine + N(6)-ubiquitinyl-[acceptor protein]-L-lysine.. The protein operates within protein modification; protein ubiquitination. In terms of biological role, membrane-bound E3 ubiquitin-protein ligase that mediates ubiquitination of target proteins. May function together with E2 ubiquitin-conjugating enzymes UBE2D1/UBCH5A and UBE2D2/UBC4. Mediates ubiquitination of PXN/paxillin,thereby regulating cell motility and localization of PXN/paxillin. Catalyzes ubiquitination of Salmonella type III secreted protein sopA. Mediates the 'Lys-63'-linked polyubiquitination of JKAMP thereby regulating JKAMP function by decreasing its association with components of the proteasome and ERAD; the ubiquitination appears to involve E2 ubiquitin-conjugating enzyme UBE2N. Mediates the 'Lys-48'-linked polyubiquitination of STING1 at 'Lys-150' leading to its proteasomal degradation; the ubiquitination occurs in mitochondria after viral transfection and regulates antiviral responses. Catalyzes ubiquitination and subsequent degradation of ATG4B, thereby inhibiting autophagy. The sequence is that of E3 ubiquitin-protein ligase RNF5 from Homo sapiens (Human).